Here is a 255-residue protein sequence, read N- to C-terminus: 3-dehydroquinate dehydratase (255 aa).

Residues 47-49 and arginine 83 each bind 3-dehydroquinate; that span reads EWR. Residue histidine 144 is the Proton donor/acceptor of the active site. Lysine 171 serves as the catalytic Schiff-base intermediate with substrate. Residues arginine 214, serine 233, and glutamine 237 each contribute to the 3-dehydroquinate site.

This sequence belongs to the type-I 3-dehydroquinase family. In terms of assembly, homodimer or homotetramer.

It catalyses the reaction 3-dehydroquinate = 3-dehydroshikimate + H2O. It participates in metabolic intermediate biosynthesis; chorismate biosynthesis; chorismate from D-erythrose 4-phosphate and phosphoenolpyruvate: step 3/7. Its function is as follows. Involved in the third step of the chorismate pathway, which leads to the biosynthesis of aromatic amino acids. Catalyzes the cis-dehydration of 3-dehydroquinate (DHQ) and introduces the first double bond of the aromatic ring to yield 3-dehydroshikimate. The reaction involves the formation of an imine intermediate between the keto group of 3-dehydroquinate and the epsilon-amino group of Lys-170 at the active site. This is 3-dehydroquinate dehydratase from Clostridioides difficile (strain 630) (Peptoclostridium difficile).